The sequence spans 341 residues: Tryptophan--tRNA ligase (341 aa).

Residues 11-13 (RPT) and 19-20 (GH) each bind ATP. Positions 12–20 (PTGKLHIGH) match the 'HIGH' region motif. Position 140 (Asp-140) interacts with L-tryptophan. ATP-binding positions include 152 to 154 (GTD), Leu-194, and 202 to 206 (KMSKS). The 'KMSKS' region signature appears at 202–206 (KMSKS).

The protein belongs to the class-I aminoacyl-tRNA synthetase family. In terms of assembly, homodimer.

The protein resides in the cytoplasm. It carries out the reaction tRNA(Trp) + L-tryptophan + ATP = L-tryptophyl-tRNA(Trp) + AMP + diphosphate + H(+). Catalyzes the attachment of tryptophan to tRNA(Trp). In Streptococcus agalactiae serotype III (strain NEM316), this protein is Tryptophan--tRNA ligase.